The chain runs to 753 residues: 5-methyltetrahydropteroyltriglutamate--homocysteine methyltransferase (753 aa).

5-methyltetrahydropteroyltri-L-glutamate is bound by residues arginine 17–lysine 20 and lysine 117. Residues isoleucine 431–serine 433 and glutamate 484 contribute to the L-homocysteine site. L-methionine is bound by residues isoleucine 431 to serine 433 and glutamate 484. Residues arginine 515–cysteine 516 and tryptophan 561 each bind 5-methyltetrahydropteroyltri-L-glutamate. Aspartate 599 serves as a coordination point for L-homocysteine. Aspartate 599 is an L-methionine binding site. Glutamate 605 provides a ligand contact to 5-methyltetrahydropteroyltri-L-glutamate. Residues histidine 641, cysteine 643, and glutamate 665 each contribute to the Zn(2+) site. Residue histidine 694 is the Proton donor of the active site. Residue cysteine 726 coordinates Zn(2+).

The protein belongs to the vitamin-B12 independent methionine synthase family. Zn(2+) is required as a cofactor.

The catalysed reaction is 5-methyltetrahydropteroyltri-L-glutamate + L-homocysteine = tetrahydropteroyltri-L-glutamate + L-methionine. The protein operates within amino-acid biosynthesis; L-methionine biosynthesis via de novo pathway; L-methionine from L-homocysteine (MetE route): step 1/1. Functionally, catalyzes the transfer of a methyl group from 5-methyltetrahydrofolate to homocysteine resulting in methionine formation. The polypeptide is 5-methyltetrahydropteroyltriglutamate--homocysteine methyltransferase (Shigella boydii serotype 4 (strain Sb227)).